Consider the following 376-residue polypeptide: Mannosyl phosphorylinositol ceramide synthase CSH1 (376 aa).

2 helical membrane passes run 7 to 27 and 274 to 294; these read ILII…FDLL and ILSC…GEFT. A disordered region spans residues 331–351; sequence NKEKRRNPTRHEYNSRGKRLR. Residue Ser-354 is modified to Phosphoserine.

It belongs to the glycosyltransferase 32 family. As to quaternary structure, heterodimer of CSH1 and CSG2.

It is found in the vacuole membrane. The enzyme catalyses a 1D-myo-inositol-1-phospho-N-[(R)-2-hydroxy-very-long-chain fatty acyl]-(R)-4-hydroxysphingoid base + GDP-alpha-D-mannose = an alpha-D-mannosyl-(1&lt;-&gt;6)-1D-myo-inositol-1-phospho-N-[(R)-2-hydroxy-very-long-chain fatty acyl]-(R)-4-hydroxysphingoid base + GDP + H(+). Involved in the synthesis of mannosyl phosphorylinositol ceramide. Catalyzes the addition of mannosyl to phosphorylinositol ceramide. The sequence is that of Mannosyl phosphorylinositol ceramide synthase CSH1 from Saccharomyces cerevisiae (strain ATCC 204508 / S288c) (Baker's yeast).